A 137-amino-acid chain; its full sequence is Basic phospholipase A2 homolog bothropstoxin-I (137 aa).

The first 16 residues, 1–16 (MRTLWIMAVLLVGVEG), serve as a signal peptide directing secretion. 7 cysteine pairs are disulfide-bonded: Cys-42–Cys-131, Cys-44–Cys-60, Cys-59–Cys-111, Cys-65–Cys-137, Cys-66–Cys-104, Cys-73–Cys-97, and Cys-91–Cys-102. Residues 121–133 (KKYRYHLKPFCKK) are important for membrane-damaging activities in eukaryotes and bacteria; heparin-binding.

It belongs to the phospholipase A2 family. Group II subfamily. K49 sub-subfamily. As to quaternary structure, homodimer; non-covalently linked (probable alternative/compact dimer conformation in solution). Binds to heparin. Expressed by the venom gland.

It is found in the secreted. Suramin inhibits both myotoxic and muscle-paralyzing activities. Chicoric acid inhibits myotoxic activity. Zinc ions inhibits the myotoxic activity and the neuromuscular blockade. Heparin inhibits myotoxic activity. In terms of biological role, snake venom phospholipase A2 homolog that lacks enzymatic activity. Shows local myotoxic activity. Induces inflammation, since it induces edema and leukocytes infiltration. In addition, it induces NLRP3 NLRP3, ASC (PYCARD), caspase-1 (CASP1), and IL-1beta (IL1B) gene expression in the gastrocnemius muscle, showing that it is able to activate NLRP3 inflammasome. It also damages artificial and myoblast membranes by a calcium-independent mechanism, has bactericidal activity, and induces neuromuscular blockade. A model of myotoxic mechanism has been proposed: an apo Lys49-PLA2 is activated by the entrance of a hydrophobic molecule (e.g. fatty acid) at the hydrophobic channel of the protein leading to a reorientation of a monomer. This reorientation causes a transition between 'inactive' to 'active' states, causing alignment of C-terminal and membrane-docking sites (MDoS) side-by-side and putting the membrane-disruption sites (MDiS) in the same plane, exposed to solvent and in a symmetric position for both monomers. The MDoS region stabilizes the toxin on membrane by the interaction of charged residues with phospholipid head groups. Subsequently, the MDiS region destabilizes the membrane with penetration of hydrophobic residues. This insertion causes a disorganization of the membrane, allowing an uncontrolled influx of ions (i.e. calcium and sodium), and eventually triggering irreversible intracellular alterations and cell death. This is Basic phospholipase A2 homolog bothropstoxin-I from Bothrops jararacussu (Jararacussu).